The sequence spans 25 residues: Neuromedin-U-25 (25 aa).

Residue Gln18 is modified to Pyrrolidone carboxylic acid. Asn25 carries the asparagine amide modification.

Belongs to the NmU family.

Its subcellular location is the secreted. Its function is as follows. Stimulates uterine smooth muscle contraction and causes selective vasoconstriction. In Canis lupus familiaris (Dog), this protein is Neuromedin-U-25 (NMU).